The following is a 39-amino-acid chain: Conotoxin Cl14.7 (39 aa).

A propeptide spanning residues 1-15 (MGDLSEADSMKHQLQ) is cleaved from the precursor.

Post-translationally, contains 2 disulfide bonds. Expressed by the venom duct.

It is found in the secreted. This chain is Conotoxin Cl14.7, found in Californiconus californicus (California cone).